Here is a 785-residue protein sequence, read N- to C-terminus: MTESNLGTESRTATIDNGAFGTRVITFSTGRLARQAAGSVVAQLGETVVLSATTVGRQPKEHFDFFPLTVDVEERMYAAGRIPGSFFRREGRPSEDAILTCRLIDRPLRPSFVKGLRNEVQVVETVLALDPSHPYDVVAINAASMSTKLSGLPFSGPIGATRMAHIDGSWVAFPTHEELVRATFDMVVAGRALPDGDVAIMMVEAEATAHTAKLVADGASAPTEEVVASGLEAAKPAIRELCRAQSELAEVAAKPVAEFPVFLDYSDDVYDAVTELAREDVAEALKIAGKADREEALDRIKARAVEELGPRFEGREKELSAALRSLTKSEVRSRVLREQVRIDGRGPRDIRPLTAEVGVLPRVHGSALFERGETQIMGVTTLNMLRMEQSLDTLSPEKSKRYMHNYNFPPYSTGETGRVGSPKRREIGHGALAERALIPVLPSREEFPYAIRQVSEALGSNGSTSMGSVCASTLGLLSAGVPLKAPVAGIAMGLISDEVEGKTRYVTLTDILGAEDAFGDMDFKVAGTQEFVTALQLDTKLDGIPSDVLAAALQQAYEARQTILEVMQAAIEAPATMSDYAPRVTTVKIPVDKIGMVIGPKGQTINAIQDETGAEISIEDDGTIYVGATNGPAAQAAVERINGIANPTLPKVGDRFLGTVVKTAAFGAFISLLPGRDGLLHISKVGDGKRVEKVEDFLNVGDKVEVEIADIDQRGKIYLDKVRPEGAEAPAEGAAERPAGRDRGDRGPRDRGDRGGRGPDRGDSGDGGDGGEGGESRPRRRTRRS.

Residues Asp-516 and Asp-522 each coordinate Mg(2+). The 60-residue stretch at 582-641 (PRVTTVKIPVDKIGMVIGPKGQTINAIQDETGAEISIEDDGTIYVGATNGPAAQAAVERI) folds into the KH domain. The S1 motif domain maps to 653–722 (GDRFLGTVVK…QRGKIYLDKV (70 aa)). The disordered stretch occupies residues 722–785 (VRPEGAEAPA…SRPRRRTRRS (64 aa)). Positions 734–764 (AAERPAGRDRGDRGPRDRGDRGGRGPDRGDS) are enriched in basic and acidic residues.

The protein belongs to the polyribonucleotide nucleotidyltransferase family. Requires Mg(2+) as cofactor.

The protein localises to the cytoplasm. The catalysed reaction is RNA(n+1) + phosphate = RNA(n) + a ribonucleoside 5'-diphosphate. In terms of biological role, involved in mRNA degradation. Catalyzes the phosphorolysis of single-stranded polyribonucleotides processively in the 3'- to 5'-direction. This Salinispora tropica (strain ATCC BAA-916 / DSM 44818 / JCM 13857 / NBRC 105044 / CNB-440) protein is Polyribonucleotide nucleotidyltransferase.